A 120-amino-acid polypeptide reads, in one-letter code: Ribosome-binding factor A (120 aa).

This sequence belongs to the RbfA family. As to quaternary structure, monomer. Binds 30S ribosomal subunits, but not 50S ribosomal subunits or 70S ribosomes.

The protein localises to the cytoplasm. Its function is as follows. One of several proteins that assist in the late maturation steps of the functional core of the 30S ribosomal subunit. Associates with free 30S ribosomal subunits (but not with 30S subunits that are part of 70S ribosomes or polysomes). Required for efficient processing of 16S rRNA. May interact with the 5'-terminal helix region of 16S rRNA. This Chlamydia abortus (strain DSM 27085 / S26/3) (Chlamydophila abortus) protein is Ribosome-binding factor A.